The sequence spans 586 residues: Proton channel OTOP1 (586 aa).

The Cytoplasmic segment spans residues 1-52 (MVEHGGTDSMWLNKYNPAAASSASSSSSSDAENKLFSRLKVSLTKKYPQKNA). Residues 53-74 (ELLSAQYGTNLLLLGVSVMLAL) form a helical membrane-spanning segment. Residues 75–82 (AAQSGPVK) are Extracellular-facing. A helical transmembrane segment spans residues 83-106 (EEHLLSFITVLMLVQLVWMLCYMI). The Cytoplasmic portion of the chain corresponds to 107–124 (RRERERSPVPERDAHAGA). Residues 125 to 147 (SWIRGGLTMLALLSLIMDAFRIG) traverse the membrane as a helical segment. At 148–157 (YFVGYHSCIS) the chain is on the extracellular side. The helical transmembrane segment at 158-182 (AALGVYPIVHALHTISQVHFLWFHI) threads the bilayer. Residues 183–190 (KDVIKKYE) are Cytoplasmic-facing. A helical transmembrane segment spans residues 191-217 (TFERFGVIHAVFTNLLLWCNGVMSETE). The Extracellular portion of the chain corresponds to 218-255 (HFMHNHRRRLIEMGYANLSTVDVQPHCNCTTSVCSMFS). Residues 256–281 (TSLYYLYPFNIEYHIFVSAMLFVMWK) form a helical membrane-spanning segment. The Cytoplasmic segment spans residues 282–303 (NIGRTLDRHSNRKRRSTGSTGL). Residues 304-326 (LLGPLGGLVALASSVSVLVVYLI) traverse the membrane as a helical segment. Residues 327–336 (HLEKTEEMHE) are Extracellular-facing. The chain crosses the membrane as a helical span at residues 337–362 (AAVSMFYYYGVAMMACMCVGSGTGLL). Residues 363-380 (VYRMENRPMDTGSNPART) lie on the Cytoplasmic side of the membrane. A helical transmembrane segment spans residues 381–405 (LDTELLLASSLGSWLMSWCSVVASV). At 406–417 (AEAGQKSPSFSW) the chain is on the extracellular side. A helical transmembrane segment spans residues 418-438 (TSLTYSLLLVLEKCIQNLFIV). Topologically, residues 439–518 (ESLYRRHSEE…TPGRKRQILK (80 aa)) are cytoplasmic. Positions 484 to 505 (PAAGSHALSRKQPDAPLPAGQR) are disordered. The helical transmembrane segment at 519–537 (NICMFLFMCNISLWILPAF) threads the bilayer. Residues 538 to 555 (GCRPQYDNPLENETFGTS) are Extracellular-facing. A helical transmembrane segment spans residues 556 to 579 (VWTTVLNVAIPLNLFYRMHSVASL). Residues 580-586 (FEVFRKV) are Cytoplasmic-facing.

The protein belongs to the otopetrin family. As to quaternary structure, homodimer.

Its subcellular location is the cell membrane. It localises to the cell projection. The protein localises to the microvillus. The enzyme catalyses H(+)(in) = H(+)(out). Its activity is regulated as follows. Activated by both acid and alkali, with proton influx in response to extracellular acid and proton efflux during alkali stimulation. Inhibited by Zn(2+); this inhibition is thought to be pH-sensitive. Currents evoked in response to mild acid (pH 6.0) stimulus may also be mildly potentiated by exposure to Zn(2+). Activated by NH(4)Cl. Proton-selective ion channel. Biphasically modulated by acid and alkali, mediating proton influx and efflux in response to extracellular acid and base stimulation, respectively. May be involved in acid and base perception. Sensor for ammonium chloride (NH(4)Cl) in taste receptor cells. NH(4)Cl acts by increasing the intracellular pH, thereby generating a driving force for proton entry through OTOP1 channel. Plays a role in the regulation of Ca(2+) flux in response to purigenic (ATP, ADP and UDP) stimuli, leading to increase in cytosolic Ca(2+) due to influx of extracellular calcium. May play this role by inhibiting P2Y purinoceptor-mediated Ca(2+) release in a Ca(2+)-dependent manner and promote an influx of Ca(2+) in response to ATP. Through this mechanism and possibly others, plays a role in the formation and function of calcium carbonate-based structures in the vestibular system of the inner ear, called otoconia, that sense gravity and linear acceleration. The chain is Proton channel OTOP1 from Danio rerio (Zebrafish).